A 125-amino-acid chain; its full sequence is uncharacterized protein (125 aa).

This is an uncharacterized protein from Escherichia coli (Bacteriophage T4).